A 77-amino-acid polypeptide reads, in one-letter code: Sec-independent protein translocase protein TatA (77 aa).

The chain crosses the membrane as a helical span at residues 1-21; sequence MGSFSIWHWLIVLVIVMLVFG. The segment at 46–77 is disordered; the sequence is GEGKAAADPAQSKELRDSTTIDVEAKEKTRQQ.

It belongs to the TatA/E family. In terms of assembly, the Tat system comprises two distinct complexes: a TatABC complex, containing multiple copies of TatA, TatB and TatC subunits, and a separate TatA complex, containing only TatA subunits. Substrates initially bind to the TatABC complex, which probably triggers association of the separate TatA complex to form the active translocon.

Its subcellular location is the cell inner membrane. In terms of biological role, part of the twin-arginine translocation (Tat) system that transports large folded proteins containing a characteristic twin-arginine motif in their signal peptide across membranes. TatA could form the protein-conducting channel of the Tat system. The chain is Sec-independent protein translocase protein TatA from Cupriavidus necator (strain ATCC 17699 / DSM 428 / KCTC 22496 / NCIMB 10442 / H16 / Stanier 337) (Ralstonia eutropha).